A 359-amino-acid chain; its full sequence is CCAAT/enhancer-binding protein alpha (359 aa).

Residues 1–55 (MESADFYEVEPRPPMSSHLQSPPHAPSNAAFGFPRGAGPAPPPAPPAAPEPLGGI) form a disordered region. The tract at residues 1-70 (MESADFYEVE…SIDISAYIDP (70 aa)) is required to repress E2F1:TFDP1-mediated transcription, to inhibit cell cycle and to induce adipocyte differentiation. Residues 29–38 (AAFGFPRGAG) show a composition bias toward low complexity. The span at 39–49 (PAPPPAPPAAP) shows a compositional bias: pro residues. A required for interaction with TRIB1 region spans residues 54–72 (GICEHETSIDISAYIDPAA). The segment at 126–200 (PPGYGCAAAG…HASPAHLAAP (75 aa)) is required to induce adipocyte differentiation. N6-acetyllysine; alternate is present on Lys159. Residue Lys159 forms a Glycyl lysine isopeptide (Lys-Gly) (interchain with G-Cter in SUMO); alternate linkage. Lys159 is covalently cross-linked (Glycyl lysine isopeptide (Lys-Gly) (interchain with G-Cter in SUMO2); alternate). 2 disordered regions span residues 176–195 (LFPYQPPPPPPPPHPHASPA) and 213–293 (TMHL…RERN). A compositionally biased stretch (pro residues) spans 179–191 (YQPPPPPPPPHPH). The required to functionally cooperate with SREBF1 in promoter activation stretch occupies residues 180–194 (QPPPPPPPPHPHASP). Ser193 bears the Phosphoserine mark. The segment covering 220–232 (HPTPPPTPVPSPH) has biased composition (pro residues). Thr222 and Thr226 each carry phosphothreonine; by GSK3. Ser230 is modified (phosphoserine; by GSK3). Residues 233 to 255 (AAPALGAAGLPGPGSALKGLAGA) are compositionally biased toward low complexity. Residues 240 to 359 (AGLPGPGSAL…SLVKAMGNCA (120 aa)) are interaction with FOXO1. Over residues 261 to 272 (TGGGGGGSGAGA) the composition is skewed to gly residues. The segment covering 277–293 (KSVDKNSNEYRVRRERN) has biased composition (basic and acidic residues). The 64-residue stretch at 283 to 346 (SNEYRVRRER…DTLRGIFRQL (64 aa)) folds into the bZIP domain. The DNA-binding element occupies 286–301 (YRVRRERNNIAVRKSR). Residues 287-314 (RVRRERNNIAVRKSRDKAKQRNVETQQK) are basic motif. Residues 318–346 (LTSDNDRLRKRVEQLSRELDTLRGIFRQL) are leucine-zipper.

This sequence belongs to the bZIP family. C/EBP subfamily. Binds DNA as a homodimer and as a heterodimer. Can form stable heterodimers with CEBPB, CEBPD, CEBPE and CEBPG. Interacts with PRDM16. Interacts with UBN1. Interacts with ZNF638; this interaction increases transcriptional activation. Interacts with the complex TFDP2:E2F1; the interaction prevents CEBPA binding to target gene promoters and represses its transcriptional activity. Interacts with RB1. Interacts (when phosphorylated at Ser-193) with CDK2, CDK4, E2F4 and SMARCA2. Interacts with SREBPF1. Interacts with FOXO1 (via the Fork-head domain); the interaction increases when FOXO1 is deacetylated. Interacts with SIX1. Interacts (via recognition sequence) with TRIB1. Interacts (via bZIP domain) with OVOL2 (via zinc-finger domains); the interaction inhibits the transcription factor activity of CEBPA and is required to repress adipogenesis. In terms of assembly, interacts with TAF1A and UBTF. As to quaternary structure, interacts with TAF1A and UBTF. Interacts with NPM1. Post-translationally, sumoylated, sumoylation blocks the inhibitory effect on cell proliferation by disrupting the interaction with SMARCA2. In terms of processing, phosphorylation at Ser-193 is required for interaction with CDK2, CDK4 and SWI/SNF complex leading to cell cycle inhibition. Dephosphorylated at Ser-193 by protein phosphatase 2A (PP2A) through PI3K/AKT signaling pathway regulation. Phosphorylation at Thr-222 and Thr-226 by GSK3 is constitutive in adipose tissue and lung. In liver, both Thr-222 and Thr-226 are phosphorylated only during feeding but not during fasting. Phosphorylation of the GSK3 consensus sites selectively decreases transactivation activity on IRE-controlled promoters. Ubiquitinated by COP1 upon interaction with TRIB1. As to expression, isoform 2 and isoform 3 are expressed in adipose tissue and liver (at protein level).

Its subcellular location is the nucleus. The protein resides in the nucleolus. Its function is as follows. Transcription factor that coordinates proliferation arrest and the differentiation of myeloid progenitors, adipocytes, hepatocytes, and cells of the lung and the placenta. Binds directly to the consensus DNA sequence 5'-T[TG]NNGNAA[TG]-3' acting as an activator on distinct target genes. During early embryogenesis, plays essential and redundant functions with CEBPB. Essential for the transition from common myeloid progenitors (CMP) to granulocyte/monocyte progenitors (GMP). Critical for the proper development of the liver and the lung. Necessary for terminal adipocyte differentiation, is required for postnatal maintenance of systemic energy homeostasis and lipid storage. To regulate these different processes at the proper moment and tissue, interplays with other transcription factors and modulators. Down-regulates the expression of genes that maintain cells in an undifferentiated and proliferative state through E2F1 repression, which is critical for its ability to induce adipocyte and granulocyte terminal differentiation. Reciprocally E2F1 blocks adipocyte differentiation by binding to specific promoters and repressing CEBPA binding to its target gene promoters. Proliferation arrest also depends on a functional binding to SWI/SNF complex. In liver, regulates gluconeogenesis and lipogenesis through different mechanisms. To regulate gluconeogenesis, functionally cooperates with FOXO1 binding to IRE-controlled promoters and regulating the expression of target genes such as PCK1 or G6PC1. To modulate lipogenesis, interacts and transcriptionally synergizes with SREBF1 in promoter activation of specific lipogenic target genes such as ACAS2. In adipose tissue, seems to act as FOXO1 coactivator accessing to ADIPOQ promoter through FOXO1 binding sites. Functionally, can act as dominant-negative. Binds DNA and have transctivation activity, even if much less efficiently than isoform 2. Does not inhibit cell proliferation. Directly and specifically enhances ribosomal DNA transcription interacting with RNA polymerase I-specific cofactors and inducing histone acetylation. This is CCAAT/enhancer-binding protein alpha from Mus musculus (Mouse).